We begin with the raw amino-acid sequence, 162 residues long: Shikimate kinase (162 aa).

11–16 (GSGKSS) lines the ATP pocket. Serine 15 provides a ligand contact to Mg(2+). Substrate is bound by residues aspartate 33, arginine 57, and glycine 80. Arginine 116 provides a ligand contact to ATP. Position 132 (arginine 132) interacts with substrate.

The protein belongs to the shikimate kinase family. In terms of assembly, monomer. Requires Mg(2+) as cofactor.

It is found in the cytoplasm. It carries out the reaction shikimate + ATP = 3-phosphoshikimate + ADP + H(+). It participates in metabolic intermediate biosynthesis; chorismate biosynthesis; chorismate from D-erythrose 4-phosphate and phosphoenolpyruvate: step 5/7. Functionally, catalyzes the specific phosphorylation of the 3-hydroxyl group of shikimic acid using ATP as a cosubstrate. This Helicobacter pylori (strain HPAG1) protein is Shikimate kinase.